A 191-amino-acid polypeptide reads, in one-letter code: Signal peptidase IB (191 aa).

The Cytoplasmic segment spans residues Met-1–Glu-7. Residues Trp-8–Thr-28 traverse the membrane as a helical segment. Topologically, residues Pro-29 to Asn-191 are extracellular. Active-site residues include Ser-36 and Lys-77.

Belongs to the peptidase S26 family.

The protein resides in the cell membrane. It carries out the reaction Cleavage of hydrophobic, N-terminal signal or leader sequences from secreted and periplasmic proteins.. In terms of biological role, essential for cell viability. In Staphylococcus aureus (strain MRSA252), this protein is Signal peptidase IB (spsB).